Consider the following 109-residue polypeptide: UPF0102 protein Suden_1901 (109 aa).

The protein belongs to the UPF0102 family.

The sequence is that of UPF0102 protein Suden_1901 from Sulfurimonas denitrificans (strain ATCC 33889 / DSM 1251) (Thiomicrospira denitrificans (strain ATCC 33889 / DSM 1251)).